A 480-amino-acid polypeptide reads, in one-letter code: Molybdate-anion transporter (480 aa).

The next 12 helical transmembrane spans lie at 1–21 (MFVT…GLEL), 44–63 (ATFL…QGPY), 78–98 (IAIL…FSGW), 129–149 (FVLI…TTTF), 177–197 (TWNH…AEWL), 199–219 (LGPV…AWFV), 274–294 (VMLL…FIFL), 304–324 (SPLG…SLLF), 339–359 (VLCV…FSTV), 369–389 (FLAF…LNFL), 401–421 (SVLA…LLAL), and 441–461 (FGGC…LFTL).

Belongs to the major facilitator superfamily.

The protein localises to the cell membrane. In terms of biological role, mediates high-affinity intracellular uptake of the rare oligo-element molybdenum. This Takifugu rubripes (Japanese pufferfish) protein is Molybdate-anion transporter (mfsd5).